The following is a 462-amino-acid chain: MIRLRFAPSPTGLLHVGGARTALFNWLYAKKHNGKFIIRIEDTDTERSTKEYETKILSALEWLGLNWDEGPDIGGGVGPYRQSERLHIYQDIAQKLINEKLAYYAVYDGENEIHRSFEYPKKFKDKSIVVKFKVVKEDKTNFHDLLKGEMSFENKFFNDFIIIKSNGFPTYNFAVVVDDHFMKISHVFRGEDHLSNTPKQIMIYNALGWKNPTFMHIPLILGNDKTPLSKRHGGTSVDFFKESGILNNALLNYLAILGWHVDEEIFNVKKKIHTFDYRNISNKSVVFDYKKLEWLNGQHMRNLDIEELIIKFKEFLKLKNYNLNIDETLEYTKDVIIICREKVNTLSQLFEISFSFFTEEYNYEENYIKKFLKKKETGDILRKAIESFEKLENYEISSIENTLRKIVEDMNLATKKVFQTIRGALLGKLVTPGLFESIEVLGKEKTLKRLKKTLDIWEKYEV.

The 'HIGH' region motif lies at 8–18 (PSPTGLLHVGG). The 'KMSKS' region motif lies at 227–231 (PLSKR). K230 serves as a coordination point for ATP.

It belongs to the class-I aminoacyl-tRNA synthetase family. Glutamate--tRNA ligase type 1 subfamily. In terms of assembly, monomer.

The protein resides in the cytoplasm. The catalysed reaction is tRNA(Glu) + L-glutamate + ATP = L-glutamyl-tRNA(Glu) + AMP + diphosphate. In terms of biological role, catalyzes the attachment of glutamate to tRNA(Glu) in a two-step reaction: glutamate is first activated by ATP to form Glu-AMP and then transferred to the acceptor end of tRNA(Glu). The protein is Glutamate--tRNA ligase 2 of Thermosipho melanesiensis (strain DSM 12029 / CIP 104789 / BI429).